The primary structure comprises 179 residues: Peptide deformylase 2 (179 aa).

The Fe cation site is built by cysteine 102 and histidine 144. Glutamate 145 is an active-site residue. A Fe cation-binding site is contributed by histidine 148.

It belongs to the polypeptide deformylase family. Requires Fe(2+) as cofactor.

It catalyses the reaction N-terminal N-formyl-L-methionyl-[peptide] + H2O = N-terminal L-methionyl-[peptide] + formate. In terms of biological role, removes the formyl group from the N-terminal Met of newly synthesized proteins. Requires at least a dipeptide for an efficient rate of reaction. N-terminal L-methionine is a prerequisite for activity but the enzyme has broad specificity at other positions. This Nostoc sp. (strain PCC 7120 / SAG 25.82 / UTEX 2576) protein is Peptide deformylase 2.